Reading from the N-terminus, the 242-residue chain is Lectin-like protein At1g53060 (242 aa).

The segment at 3 to 237 is legume-lectin like; the sequence is FHGDAEYASE…RHEILDWSFE (235 aa). Position 207 is a phosphoserine (S207).

The protein belongs to the leguminous lectin family.

This is Lectin-like protein At1g53060 from Arabidopsis thaliana (Mouse-ear cress).